The following is a 60-amino-acid chain: Large ribosomal subunit protein bL33 (60 aa).

Belongs to the bacterial ribosomal protein bL33 family.

This Flavobacterium johnsoniae (strain ATCC 17061 / DSM 2064 / JCM 8514 / BCRC 14874 / CCUG 350202 / NBRC 14942 / NCIMB 11054 / UW101) (Cytophaga johnsonae) protein is Large ribosomal subunit protein bL33.